The sequence spans 846 residues: Leucine--tRNA ligase (846 aa).

The short motif at 42 to 52 is the 'HIGH' region element; sequence PYPSGNLHMGH. The 'KMSKS' region signature appears at 586 to 590; the sequence is KMSKS. Lys589 is an ATP binding site.

This sequence belongs to the class-I aminoacyl-tRNA synthetase family.

Its subcellular location is the cytoplasm. The enzyme catalyses tRNA(Leu) + L-leucine + ATP = L-leucyl-tRNA(Leu) + AMP + diphosphate. The sequence is that of Leucine--tRNA ligase from Heliobacterium modesticaldum (strain ATCC 51547 / Ice1).